The sequence spans 328 residues: tRNA U34 carboxymethyltransferase (328 aa).

Residues K91, W105, K110, G130, 152–154 (DPS), M196, Y200, and R315 contribute to the carboxy-S-adenosyl-L-methionine site.

This sequence belongs to the class I-like SAM-binding methyltransferase superfamily. CmoB family. Homotetramer.

It catalyses the reaction carboxy-S-adenosyl-L-methionine + 5-hydroxyuridine(34) in tRNA = 5-carboxymethoxyuridine(34) in tRNA + S-adenosyl-L-homocysteine + H(+). Its function is as follows. Catalyzes carboxymethyl transfer from carboxy-S-adenosyl-L-methionine (Cx-SAM) to 5-hydroxyuridine (ho5U) to form 5-carboxymethoxyuridine (cmo5U) at position 34 in tRNAs. This Psychromonas ingrahamii (strain DSM 17664 / CCUG 51855 / 37) protein is tRNA U34 carboxymethyltransferase.